We begin with the raw amino-acid sequence, 385 residues long: 8-amino-7-oxononanoate synthase (385 aa).

Arg-23 serves as a coordination point for substrate. Gly-110–Phe-111 provides a ligand contact to pyridoxal 5'-phosphate. His-135 lines the substrate pocket. Positions 180, 208, and 234 each coordinate pyridoxal 5'-phosphate. N6-(pyridoxal phosphate)lysine is present on Lys-237. Substrate is bound at residue Thr-350.

This sequence belongs to the class-II pyridoxal-phosphate-dependent aminotransferase family. BioF subfamily. In terms of assembly, homodimer. Pyridoxal 5'-phosphate is required as a cofactor.

It catalyses the reaction 6-carboxyhexanoyl-[ACP] + L-alanine + H(+) = (8S)-8-amino-7-oxononanoate + holo-[ACP] + CO2. The protein operates within cofactor biosynthesis; biotin biosynthesis. In terms of biological role, catalyzes the decarboxylative condensation of pimeloyl-[acyl-carrier protein] and L-alanine to produce 8-amino-7-oxononanoate (AON), [acyl-carrier protein], and carbon dioxide. In Vibrio vulnificus (strain CMCP6), this protein is 8-amino-7-oxononanoate synthase.